Consider the following 459-residue polypeptide: GTPase Der (459 aa).

2 consecutive EngA-type G domains span residues 4–169 (PLVA…PEVA) and 179–355 (IAVA…AAHR). Residues 10-17 (GRPNVGKS), 57-61 (DTGGL), 120-123 (NKCE), 185-192 (GRPNVGKS), 232-236 (DTAGI), and 297-300 (NKWD) each bind GTP. The KH-like domain occupies 356-441 (KRIATSVVNE…PIRFRWRSKS (86 aa)).

This sequence belongs to the TRAFAC class TrmE-Era-EngA-EngB-Septin-like GTPase superfamily. EngA (Der) GTPase family. Associates with the 50S ribosomal subunit.

In terms of biological role, GTPase that plays an essential role in the late steps of ribosome biogenesis. The chain is GTPase Der from Synechococcus sp. (strain JA-3-3Ab) (Cyanobacteria bacterium Yellowstone A-Prime).